A 382-amino-acid polypeptide reads, in one-letter code: Anhydro-N-acetylmuramic acid kinase (382 aa).

15-22 (GTSLDGVD) is an ATP binding site.

Belongs to the anhydro-N-acetylmuramic acid kinase family.

The catalysed reaction is 1,6-anhydro-N-acetyl-beta-muramate + ATP + H2O = N-acetyl-D-muramate 6-phosphate + ADP + H(+). Its pathway is amino-sugar metabolism; 1,6-anhydro-N-acetylmuramate degradation. The protein operates within cell wall biogenesis; peptidoglycan recycling. Its function is as follows. Catalyzes the specific phosphorylation of 1,6-anhydro-N-acetylmuramic acid (anhMurNAc) with the simultaneous cleavage of the 1,6-anhydro ring, generating MurNAc-6-P. Is required for the utilization of anhMurNAc either imported from the medium or derived from its own cell wall murein, and thus plays a role in cell wall recycling. The chain is Anhydro-N-acetylmuramic acid kinase from Haemophilus influenzae (strain ATCC 51907 / DSM 11121 / KW20 / Rd).